We begin with the raw amino-acid sequence, 464 residues long: MTAQDLSVHIARWLDSLPLQAGSKLVLAYSGGVDSEVLAYGLSEYAKQRPDLRYQLIYVHHGLSPNADNWAKHCQARAAIYGLPVTVERVQLILGPRVSVEAEARKARYQAILPHLNPQDILLTAHHEDDQLETILLALKRGQGPKGLAAMGQIQPLSLADKGSCLQVRPLLDISREMIETFAQTRQLVHIEDESNQDDKYDRNFLRLEIIPRLKARWPSIATTASRSAQLCAEQQAIVETEVSERLPKLLVKAPVTEQTVLKLSELAAQPIEWQGILLRGFIESQEFSLPSYVQLQQMLQQLIHAKEDAKVHIRINDCVLRRFAGMLYLDSGETLSTALHITARDLHQEILTLLTQASAMVEDKIVPFALVTTGPRLRLPKADEVVSLGYGLPGQFRCQPHFRDKGRELKKLWQECAVPPWLRAEVGFLFYNDKLVMAFGLWVEKAFCAQGDEIGLSYLIANP.

Residue 30–35 (SGGVDS) participates in ATP binding.

Belongs to the tRNA(Ile)-lysidine synthase family.

The protein localises to the cytoplasm. The catalysed reaction is cytidine(34) in tRNA(Ile2) + L-lysine + ATP = lysidine(34) in tRNA(Ile2) + AMP + diphosphate + H(+). In terms of biological role, ligates lysine onto the cytidine present at position 34 of the AUA codon-specific tRNA(Ile) that contains the anticodon CAU, in an ATP-dependent manner. Cytidine is converted to lysidine, thus changing the amino acid specificity of the tRNA from methionine to isoleucine. The protein is tRNA(Ile)-lysidine synthase of Shewanella oneidensis (strain ATCC 700550 / JCM 31522 / CIP 106686 / LMG 19005 / NCIMB 14063 / MR-1).